A 201-amino-acid chain; its full sequence is Recombination protein RecR (201 aa).

A C4-type zinc finger spans residues 60–75; that stretch reads CHACGNVDTSDPCTIC. Positions 83–178 constitute a Toprim domain; that stretch reads TTLVVVEDVS…TITRLAHGVP (96 aa).

This sequence belongs to the RecR family.

Functionally, may play a role in DNA repair. It seems to be involved in an RecBC-independent recombinational process of DNA repair. It may act with RecF and RecO. The polypeptide is Recombination protein RecR (Methylorubrum populi (strain ATCC BAA-705 / NCIMB 13946 / BJ001) (Methylobacterium populi)).